We begin with the raw amino-acid sequence, 186 residues long: Probable RNA 2'-phosphotransferase (186 aa).

The protein belongs to the KptA/TPT1 family.

In terms of biological role, removes the 2'-phosphate from RNA via an intermediate in which the phosphate is ADP-ribosylated by NAD followed by a presumed transesterification to release the RNA and generate ADP-ribose 1''-2''-cyclic phosphate (APPR&gt;P). May function as an ADP-ribosylase. This chain is Probable RNA 2'-phosphotransferase, found in Agrobacterium fabrum (strain C58 / ATCC 33970) (Agrobacterium tumefaciens (strain C58)).